Reading from the N-terminus, the 278-residue chain is Octanoyltransferase LipM (278 aa).

Residues Gly-33–Leu-248 enclose the BPL/LPL catalytic domain. Cys-150 (acyl-thioester intermediate) is an active-site residue.

Belongs to the octanoyltransferase LipM family. In terms of assembly, monomer.

It catalyses the reaction octanoyl-[ACP] + L-lysyl-[protein] = N(6)-octanoyl-L-lysyl-[protein] + holo-[ACP] + H(+). Its pathway is protein modification; protein lipoylation via endogenous pathway; protein N(6)-(lipoyl)lysine from octanoyl-[acyl-carrier-protein]. In terms of biological role, catalyzes the transfer of endogenously produced octanoic acid from octanoyl-acyl-carrier-protein onto the lipoyl domain of GcvH, an intermediate carrier during protein lipoylation. This Geobacillus kaustophilus (strain HTA426) protein is Octanoyltransferase LipM.